The following is a 259-amino-acid chain: Protein odd-skipped-related 1 (259 aa).

C2H2-type zinc fingers lie at residues 168-190, 196-218, and 224-246; these read FVCK…ERTH, YTCD…RYIH, and FKCQ…KTLH.

This sequence belongs to the Odd C2H2-type zinc-finger protein family.

Its subcellular location is the nucleus. Transcriptional repressor. Required for pronephric kidney development. This is Protein odd-skipped-related 1 from Xenopus tropicalis (Western clawed frog).